A 332-amino-acid polypeptide reads, in one-letter code: Glyceraldehyde-3-phosphate dehydrogenase 2 (332 aa).

NAD(+)-binding positions include 11 to 12 (RI), Asp-32, and Arg-77. Residues 148–150 (SCT), Thr-179, 208–209 (TG), and Arg-231 contribute to the D-glyceraldehyde 3-phosphate site. Residue Cys-149 is the Nucleophile of the active site. Position 273 is a phosphotyrosine (Tyr-273). A Phosphothreonine modification is found at Thr-274. Asn-313 serves as a coordination point for NAD(+).

This sequence belongs to the glyceraldehyde-3-phosphate dehydrogenase family. In terms of assembly, homotetramer.

The protein localises to the cytoplasm. The catalysed reaction is D-glyceraldehyde 3-phosphate + phosphate + NAD(+) = (2R)-3-phospho-glyceroyl phosphate + NADH + H(+). The protein operates within carbohydrate degradation; glycolysis; pyruvate from D-glyceraldehyde 3-phosphate: step 1/5. The chain is Glyceraldehyde-3-phosphate dehydrogenase 2 (Gapdh2) from Drosophila melanogaster (Fruit fly).